The following is a 4146-amino-acid chain: MLLAGAGGSSGDGQDGVASGPAESAAGILGRLHQLHGLLSLESGVGAEGAHSLLHNLAEECLVSALGSSALDLNTSLIFSKEFGLLAFVRKSLSSDEFKDCREEALKFLYTFLEKIGSNVQPYAMDIKTLCVIVYTKDRAAKCKIPSLELLIKLLQLLKNSIIIEEFKIGEIFNKFYGELATKSKLSDTVLEKVYELLGILGEVQPCEMTYNSEKLFKAFLGELKAQMNSSTRNPKFPVIAGCLKGLSALMINFTKTMEEDPRTSKEIFDYTVKAISPQVEMKRYAVPSAGLNLLALHASQFSSYLMDDYQSLFEVISKWCGHTNGEMKKLAFAALDSFLKQIAHLVASDAETHKNKLHFFMEQFYEIIRKMDSSNKELSIAIRGYGLFAAPCKAVNAKNVDLMYIELIQRCKQMYLTEADTEEDNVYQLPNFLQSVASVILHMDSIPEVYTPILERLLVVQIDSFPQYSLKMQSSCCKAVLKVFLSLAGKGPVLWSLISTVVHQGLIRVCSKPVVLAQDGKEGSEAETAAATGEVRAGKWKVPTYKDYLDLFRNLLRCDQLKDSIFSDEIFSTVNSPLQSLNRLLYDELMKSILKIIEKLDLSLQKQDTGQEDDGGINNLLINATSDPAGNLYATKPKDFTAFVNLVEFCSEILPKEHIEYFESWVYVFGYELVLQSTRLPLISGFYKLLSVVMKNAKKSRYFEGFTSKIYKKAPEDPERLSCFALFAKFGKEVSSKIRQFKDELLASCLTFVLHLPHDIIMMDIKAYIPALQTAFKLGLSCPPLADVGLNALQYWSTNIPSDILKPYYKDIIPLLDGYLTNLSSTNESLSTLDMVRISRSLHKGFNKQLIQQLKRMKTLSVKEESSLTAVRNRVVRILGSLGGQINRSLVTAASTEEMIKRHVSWDTEKRLRFDVPFKDLKPVIYLDMFLPHITELALSTSDRQTKVAACELLHSIVAFMLGKATQMPDDKKTGSSPMYKIYKRTFPVLLRLACDVDKVTEQLYKPLVMSLIHWFTNNKKFESQDTVALLEAILTGIVDPVDSTLRDFCGQCIQEFLRWSIKQTTPDQQAKSPVNTTSLFKRLYSLALHPNAFKRLGAALAFNNIYRDFREETALVENFVFEVLVIYMESLALSHADEKSLGTTQQCSDAVDHLKRIIIRKAASLNKATKRRIPRGFPQGNTVCLFDIVLWLLEQCGRPQTECRHKAMQLFFEFVPLLPGNKPLTAWLDDQVEKEGIIFLINRFEGAGHSDGMHTGIFNIPALHDLHEPFSMHAVLQWLDMLLAALDCYNTFIGMRFLKANTVLGKNAEKSSFLKAAFFFITSLSMENIKAAEQCMGSKSSVFSPHEIEAYNYSKCTIIVRIMEFITMFIDICQQDSLKILENSVFNEPMWELIAITVCDPSSIGFNTADVEVINNLPNICIKLMKALGNTSYRSSLEVSLKKRVTLQSIEELCSVDLYDPGARFNRVKLGSVLSACKQLYKAEFFNSIVPEQVGGQRFGSKLLSVVYKGIAPTNERKSLPSLDISSKRLAEGLLELAFMFGGQCEELVSLLLNTVILSVPLPGTSQRNIINFSHGGYFYTLFAETINTELLNNLDTIVVELMKSSLEDPKMVSCVLNGMLDQSFRQRTIRKQQGVKLVNAVLENWRRLDSWWYKDSPSESKMAVLTLLAKVLQIDSSVCFDINHSAFAEVFKTYTSILTDQKLGLNLKSQAIIILPFFTKLTGEKLTELKNTLDQFVASNFPMKSDEFPKGTLKFNNYVDCIKKFLDALELSQSPMLLQLMTEILCRDERHFMEELFQSSFKKVIKRSSCDTQVILLNTLHNMFKSESLMLNGTLQSLIDRCLLTLLWNCSLDAMISFFTNIISLAMDTLKSRFTKVPEAAFDSQITKKWGYYKMLEVQYSRLSKDEIYSTVNNAYHVSSKPEGNELTKALIKLCYDTFTENMCGETQLLEKRRQYHCAAYNCAISLISCVFSELKFYQGFLFTEKKEKNLLIFENLIDLQRNYTFPIEVEVPMERKKKYFAIRKEARDASSTESDEPSYLSSQSYMADSSLIEEMSQFDFSTGVQSFSYSSQSKMLSQSASRKKEQITEGKTFDDVMEFEMDELNQHECMAAMTGLIKHMNRSEITPKVDEDASPQELPSWMKFLHVKLGNTSTPLNIRLFIAKLIVNTEEVFRPYARFWIGPILQLIVSGNNGGTGIHYMVVETLVTILSWSSIATPNGQAKEEILANRLLEFLMKNVFHEKRAVFRHNLEIIKTVLECWKECLSIPYRLIYEGFSGTDPNTKDNSVGIQLLGLALANNFSPLDPKCGIDPERYFQSLANNLGLTRFKEVYIAAAEVIGLVLRYIVQNEKRTEAPVFDYVVKELKRHQTNNKEDKFIMCLNKVVKNFPPFADRFMTIVLFLLPKLHGVLKTQCLEIIMHRAEDIPDLFIELKNKDFCQIMNNRDDERQRVCLDIIYKILSKLTPAELHEFLIPVTAFSSHSFPVCRERMYDIFMWIYDNYRDHESQNDSKSVEVFNMAKEGLLQGLVDENTELQLIVRNFWSDETRLPSNTTERMLAILSSLYSPKIEKHYLSLATNLLLEMTSKSPDYIRKMFEHPLSECKFQDYTVDSSWRFRSSVLTPMFVETQLSQSMQRSRAQGTIEADEPIGGQLRATQQHYQFTPTQNIGGRSSFNWLTGSSMDTLADYSVESPESLPSALLFVNKRNENVRRVPLKPLGPNFGMRRLGLPGDVTDSKTKSMEDRSDILRLRRRFLKDREKLSLIYARKGTAEQKREKAIKIEQKMKQDAQITLYRNYRQGELPDIQISYSNLIAPLQALAQRDPTMAKLLFSSLFSGILTDTASDISVTDKLLKQFNSFLSNSLSYFPPFIACVQDMCYQHDELLHLNPANISTSCLASLQQPLGILLLEKGLLHMKVPDEPPAKKMRKEKEKAEIPPDIVRWIELAKLYRSIGDYDVLRGIFSGKIGAKSITQCALNAEAKSDYAKAAKLYDEALTETFSDGDPTDAEKDFWELASLECYNHLTEWKPLEYCSTVNIDTGKPPDLNKMWSDPFYQETYLPYMIRSKLKMLLGGNNDQTLLTFVDEAMKVEQRKVLMETFYSQELSLLYILQDDFDRAKYYINNGIQVFMQNYSSIDCLLYQSRLTKLQSVQALTETQDFISFIRKPGNVSSSSLRKLFQGWMKRYPDSKMDPMNIWDDIISNRCFFLDKIQDVAVGHPQLVDESMEVDDLADGNEAMEVDRQEDIAVMINKCRFTMKMKMVDSARKQNNFSVAMKLLKDLHRESKTNEDWSVKWIHSYSRYSHSRSRDLTCSEQILTALKTIPLLEESKTEYLTKNTKACRYQNMLLGDTYRIMADAVCKEPDCLYKIEDGKAGKVKDLSESPENVVGGLYRKSLHYFTNAVRKATEEEQSHSTDQIDVRGIIKAYMTLVDFCDSHLRKVEEESAVMDRADYQNFPEIMVEKMIKALKLNSSEARLKFPRMLQIIEQYPSETLDLMARENCTVPCWQFIGWISQMMAMLDKKESIAVQHIIEEIAENYPQALVYPFMVSGESYNFEDTVVGHKNREYVNRIKSKLDKDNVAQDFIRALEQLSNPPMIFQDWWEDVSNELSKPNVNKNKIKELYKEMYTNLGNPKDHFMGAFRRRFCEKYTKDFDKAFGPEGSKLLNIKCDGFNKTVGPLITKMKEQQKEPGNLKEYSPWMSEFKPEFLRNELEIPGQYSGRSKPMPEYHVKISGFDERVSVMASIRKPKRIIVRGNDEREYPFLVKGGEDLRQDQRIEQLFEIMNIILSQDAACSQRHMQLKTYQVIPMTTRIGLIEWLENTCTLKEFILNTMTEDEAKIYNSKTTNGPLYHYNAWLDKKEKVGDARQHVTSYTRCDRTNTVASFREREALVPKDLLRRAFVKMSTTPEAFLSLRSHFARSHALLCVSHWIVGIGDRHLSNFMINMETGGMIGIDFGHAFGTATQFLPVPELMPFRLTRQIVNLMLPMKDSGLFDSVMVHSLRAYRSDPGLLVTTMDVFIKEPSLDWKNLELKQMKKKGEWKKAVDVTSHNWHPQQKIHCAKRKLDGANPCEITCEELRLGHESAPEYKDFIAVARGDKKHNRRTNEPPDGLTEETQVQCLIDQATDPNILGRVWKGWEPWI.

4 HEAT repeats span residues D308–I343, V925–M962, Q1026–S1062, and P1075–F1111. TPR repeat units lie at residues P1745–P1778 and V1974–Y2007. S2075 bears the Phosphoserine; by autocatalysis mark. T2631 carries the post-translational modification Phosphothreonine; by autocatalysis. Position 2634 is a phosphoserine; by autocatalysis (S2634). Residues T2659 and T2668 each carry the phosphothreonine; by autocatalysis modification. Residues F2873 to S3556 enclose the FAT domain. The region spanning F3739–G4071 is the PI3K/PI4K catalytic domain. A G-loop region spans residues V3745–K3751. Residues G3937–N3945 are catalytic loop. The tract at residues G3957–T3982 is activation loop. Residues D4114 to I4146 enclose the FATC domain.

Belongs to the PI3/PI4-kinase family. In terms of assembly, DNA-PK is a heterotrimer of prkdc and the Ku dimer (composed of xrcc6/Ku70 and xrcc5/Ku86). Component of the core long-range non-homologous end joining (NHEJ) complex (also named DNA-PK complex) composed of prkdc, lig4, xrcc4, xrcc6/ku70, xrcc5/ku86 and nhej1/xlf. Additional component of the NHEJ complex includes paxx. Following autophosphorylation, prkdc dissociates from DNA. Autophosphorylated at two clusters, the T2609 cluster and the S2056 cluster. Autophosphorylated on Ser-2075, Thr-2631, Thr-2659 and Thr-2668. Ser-2075 and Thr-2668 are DNA damage-inducible phosphorylation sites (inducible with ionizing radiation, IR) dephosphorylated by PPP5C. Autophosphorylation induces a conformational change that leads to remodeling of the DNA-PK complex, requisite for efficient end processing and DNA repair. Autophosphorylation in trans within DNA-PK complexes loaded on DNA ends leads to the dissociation of PRKDC from DNA and the transition into the short-range NHEJ complex. Autophosphorylation of the T2609 cluster is required for hematopoietic development and protein synthesis in erythrocytes precursors.

It localises to the nucleus. Its subcellular location is the nucleolus. The enzyme catalyses L-seryl-[protein] + ATP = O-phospho-L-seryl-[protein] + ADP + H(+). It carries out the reaction L-threonyl-[protein] + ATP = O-phospho-L-threonyl-[protein] + ADP + H(+). In terms of biological role, serine/threonine-protein kinase that acts as a molecular sensor for DNA damage. Involved in DNA nonhomologous end joining (NHEJ) required for double-strand break (DSB) repair and V(D)J recombination. Must be bound to DNA to express its catalytic properties. Promotes processing of hairpin DNA structures in V(D)J recombination by activation of the hairpin endonuclease artemis (DCLRE1C). Recruited by XRCC5 and XRCC6 to DNA ends and is required to (1) protect and align broken ends of DNA, thereby preventing their degradation, (2) and sequester the DSB for repair by NHEJ. Acts as a scaffold protein to aid the localization of DNA repair proteins to the site of damage. The assembly of the DNA-PK complex at DNA ends is also required for the NHEJ ligation step. Found at the ends of chromosomes, suggesting a further role in the maintenance of telomeric stability and the prevention of chromosomal end fusion. As part of the DNA-PK complex, involved in the early steps of ribosome assembly by promoting the processing of precursor rRNA into mature 18S rRNA in the small-subunit processome. Recognizes the substrate consensus sequence [ST]-Q. Phosphorylates 'Ser-139' of histone variant H2AX, thereby regulating DNA damage response mechanism. This is DNA-dependent protein kinase catalytic subunit (prkdc) from Xenopus laevis (African clawed frog).